A 293-amino-acid chain; its full sequence is Elongation factor Ts (293 aa).

Residues 81-84 are involved in Mg(2+) ion dislocation from EF-Tu; the sequence is TDFV.

This sequence belongs to the EF-Ts family.

It is found in the cytoplasm. Functionally, associates with the EF-Tu.GDP complex and induces the exchange of GDP to GTP. It remains bound to the aminoacyl-tRNA.EF-Tu.GTP complex up to the GTP hydrolysis stage on the ribosome. The chain is Elongation factor Ts from Teredinibacter turnerae (strain ATCC 39867 / T7901).